Reading from the N-terminus, the 242-residue chain is tRNA (guanine-N(1)-)-methyltransferase (242 aa).

S-adenosyl-L-methionine contacts are provided by residues G111 and 130–135; that span reads IGDYVL.

The protein belongs to the RNA methyltransferase TrmD family. Homodimer.

The protein resides in the cytoplasm. It catalyses the reaction guanosine(37) in tRNA + S-adenosyl-L-methionine = N(1)-methylguanosine(37) in tRNA + S-adenosyl-L-homocysteine + H(+). Its function is as follows. Specifically methylates guanosine-37 in various tRNAs. The sequence is that of tRNA (guanine-N(1)-)-methyltransferase from Onion yellows phytoplasma (strain OY-M).